The chain runs to 225 residues: Histone H1.11L (225 aa).

Low complexity-rich tracts occupy residues Met1–Ala23 and Ala31–Pro43. Disordered stretches follow at residues Met1–Thr46 and Ser94–Lys225. Ser2 is modified (N-acetylserine). The region spanning Ala41–Lys114 is the H15 domain. Composition is skewed to basic residues over residues Ala123 to Ala138, Lys146 to Lys163, Lys171 to Val189, and Lys198 to Lys225.

It belongs to the histone H1/H5 family.

It localises to the nucleus. The protein localises to the chromosome. In terms of biological role, histones H1 are necessary for the condensation of nucleosome chains into higher-order structures. The protein is Histone H1.11L of Gallus gallus (Chicken).